Reading from the N-terminus, the 249-residue chain is 2,3-bisphosphoglycerate-dependent phosphoglycerate mutase (249 aa).

Substrate contacts are provided by residues 11–18 (RHGESDWN), 24–25 (TG), Arg63, 90–93 (ERHY), Lys101, 117–118 (RR), and 184–185 (GN). The active-site Tele-phosphohistidine intermediate is His12. The Proton donor/acceptor role is filled by Glu90.

Belongs to the phosphoglycerate mutase family. BPG-dependent PGAM subfamily.

It catalyses the reaction (2R)-2-phosphoglycerate = (2R)-3-phosphoglycerate. Its pathway is carbohydrate degradation; glycolysis; pyruvate from D-glyceraldehyde 3-phosphate: step 3/5. Functionally, catalyzes the interconversion of 2-phosphoglycerate and 3-phosphoglycerate. The sequence is that of 2,3-bisphosphoglycerate-dependent phosphoglycerate mutase from Mycobacterium bovis (strain BCG / Pasteur 1173P2).